Here is a 308-residue protein sequence, read N- to C-terminus: Follistatin-related protein 1 (308 aa).

Positions 1 to 20 (MWKRWLALALALVAVAWVRA) are cleaved as a signal peptide. The Follistatin-like domain maps to 30–53 (ICANVFCGAGRECAVTEKGEPTCL). 5 disulfide bridges follow: Cys-31/Cys-42, Cys-36/Cys-52, Cys-54/Cys-84, Cys-58/Cys-77, and Cys-66/Cys-98. In terms of domain architecture, Kazal-like spans 48–100 (GEPTCLCIEQCKPHKRPVCGSNGKTYLNHCELHRDACLTGSKIQVDYDGHCKE). Residue Asn-144 is glycosylated (N-linked (GlcNAc...) asparagine). One can recognise an EF-hand 1 domain in the interval 144 to 178 (NYSEILDKYFKNFDNGDSRLDSSEFLKFVEQNETA). Residue Ser-165 is modified to Phosphoserine. N-linked (GlcNAc...) asparagine glycosylation is found at Asn-175 and Asn-180. The region spanning 193–228 (LRGLCVDALIELSDENADWKLSFQEFLKCLNPSFNP) is the EF-hand 2 domain. One can recognise a VWFC domain in the interval 233–287 (CALEDETYADGAETEVDCNRCVCACGNWVCTAMTCDGKNQKGAQTQTEEEMTRYV).

In terms of assembly, homodimer. Interacts with SCN10A. Interacts with DIP2A; DIP2A may act as a cell surface receptor for FSTL1. Interacts with BMP4. Interacts with CD14; this interaction promotes TL4-mediated signaling cascade.

It is found in the secreted. Functionally, secreted glycoprotein that is involved in various physiological processes, such as angiogenesis, regulation of the immune response, cell proliferation and differentiation. Plays a role in the development of the central nervous system, skeletal system, lungs, and ureter. Promotes endothelial cell survival, migration and differentiation into network structures in an AKT-dependent manner. Also promotes survival of cardiac myocytes. Initiates various signaling cascades by activating different receptors on the cell surface such as DIP2A, TLR4 or BMP receptors. In Macaca fascicularis (Crab-eating macaque), this protein is Follistatin-related protein 1 (FSTL1).